Here is a 1867-residue protein sequence, read N- to C-terminus: Probable serine/threonine-protein kinase roco8 (1867 aa).

The 78-residue stretch at 16 to 93 (SSDGLQIKDR…DDYIFYQFDN (78 aa)) folds into the DEP 1 domain. 2 disordered regions span residues 96-115 (NNNN…TTAT) and 121-225 (VSTK…NSFN). Residues 121–223 (VSTKIGSIGK…NSNSTYNSNS (103 aa)) show a composition bias toward low complexity. The 79-residue stretch at 264–342 (GDKGLKLQKK…NNNNGGGGVM (79 aa)) folds into the DEP 2 domain. LRR repeat units follow at residues 491–512 (RLDD…IINT), 515–536 (FLRI…ESIA), 540–561 (NLES…FSRL), 563–584 (LLTK…VFQL), 586–607 (NLEE…IGSL), 609–631 (SLEK…LGLL), 633–656 (RLKS…STLP), and 657–678 (LLEQ…ITSK). The region spanning 693-941 (GTETLSHIKL…NEIIQTLLNQ (249 aa)) is the Roc domain. Disordered stretches follow at residues 763-813 (QNGI…KKRP) and 942-961 (SNNN…KQSN). Over residues 768–793 (TSSSNLNLSTGTLPPPTQLSSSTSEL) the composition is skewed to low complexity. Positions 974 to 1111 (PSIYITLETN…ILYTLKNNSN (138 aa)) constitute a COR domain. Residues 1163–1207 (SPSLSLSNSSQSVFTNPNNNNNNKSEQQQQQQQQQQQPQPISTSP) are disordered. The region spanning 1456-1864 (LIYQEEIGVG…TLNEIKDSTI (409 aa)) is the Protein kinase domain. Residues 1462 to 1470 (IGVGGFSRV) and K1483 each bind ATP. Positions 1509-1546 (SNSSLSISLSSSTSSLSPPIVNNNNNNNNLNNNLNNLN) are disordered. D1721 serves as the catalytic Proton acceptor.

It belongs to the protein kinase superfamily. TKL Ser/Thr protein kinase family. ROCO subfamily.

It catalyses the reaction L-seryl-[protein] + ATP = O-phospho-L-seryl-[protein] + ADP + H(+). It carries out the reaction L-threonyl-[protein] + ATP = O-phospho-L-threonyl-[protein] + ADP + H(+). The sequence is that of Probable serine/threonine-protein kinase roco8 (roco8) from Dictyostelium discoideum (Social amoeba).